A 687-amino-acid chain; its full sequence is Probable ATP-dependent RNA helicase Dbp73D (687 aa).

2 disordered regions span residues 1-26 and 52-87; these read MELF…TNNE and TPIL…EEDV. Composition is skewed to basic and acidic residues over residues 9–18 and 54–79; these read YTEDLKEQKD and ILEK…EKPL. A Q motif motif is present at residues 160-168; that stretch reads LFPVQKQVI. Positions 177–381 constitute a Helicase ATP-binding domain; it reads KPPPFRPRDI…DLRLFQPRLF (205 aa). 190–197 is an ATP binding site; the sequence is APTGSGKT. The DEAD box motif lies at 305–308; it reads DEAD. The Helicase C-terminal domain occupies 434–583; sequence TVFALVEKYK…EIHVSPDIEI (150 aa). The disordered stretch occupies residues 646-675; sequence IVQSSKKSSETKNSKTKADKTKYQPKETKK. The segment covering 652 to 675 has biased composition (basic and acidic residues); that stretch reads KSSETKNSKTKADKTKYQPKETKK.

It belongs to the DEAD box helicase family. DDX51/DBP6 subfamily. As to expression, expressed in the germline tissue of the ovary.

The protein resides in the nucleus. The protein localises to the nucleolus. The enzyme catalyses ATP + H2O = ADP + phosphate + H(+). Its function is as follows. ATP-binding RNA helicase involved in the biogenesis of 60S ribosomal subunits. This is Probable ATP-dependent RNA helicase Dbp73D (Dbp73D) from Drosophila melanogaster (Fruit fly).